The following is a 203-amino-acid chain: MSRYRGPRVRIIRRLGTLPGLTNKSAPQLKPSSINQSTSNKKISQYRIRLEEKQKLRFHYGITERQLLNYVRIARKAKGSTGEILLQLLEMRLDNIIFRLGMTPTIPGARQLVNHRHILVNGYIVDIPSYRCKPQDFITIKNKQKYESIISKNIELYQKSKIANHLTYSSLEKKGLVNQILDRESIGLKINELLVVEYYSRQA.

Residues 91-154 (MRLDNIIFRL…KYESIISKNI (64 aa)) enclose the S4 RNA-binding domain.

It belongs to the universal ribosomal protein uS4 family. In terms of assembly, part of the 30S ribosomal subunit. Contacts protein S5. The interaction surface between S4 and S5 is involved in control of translational fidelity.

The protein resides in the plastid. Its subcellular location is the chloroplast. Functionally, one of the primary rRNA binding proteins, it binds directly to 16S rRNA where it nucleates assembly of the body of the 30S subunit. With S5 and S12 plays an important role in translational accuracy. The chain is Small ribosomal subunit protein uS4c (rps4) from Lopidium struthiopteris (Moss).